We begin with the raw amino-acid sequence, 579 residues long: Arginine--tRNA ligase (579 aa).

Residues 123–133 (PNLAKEMHVGH) carry the 'HIGH' region motif.

The protein belongs to the class-I aminoacyl-tRNA synthetase family. As to quaternary structure, monomer.

Its subcellular location is the cytoplasm. The enzyme catalyses tRNA(Arg) + L-arginine + ATP = L-arginyl-tRNA(Arg) + AMP + diphosphate. The polypeptide is Arginine--tRNA ligase (Saccharophagus degradans (strain 2-40 / ATCC 43961 / DSM 17024)).